Consider the following 59-residue polypeptide: Protein QUA-QUINE STARCH (59 aa).

As to expression, expressed in hypocotyls, leaves, vasculature, hydathodes, trichomes, pedicels, sepals, filaments, mature pollen, stigma papillae, styles, siliques, root and shoot tips, but not in shoot meristem, petals or root epidermis.

The protein localises to the cytoplasm. Its function is as follows. Involved in regulating carbon and nitrogen allocation to starch and protein. The chain is Protein QUA-QUINE STARCH from Arabidopsis thaliana (Mouse-ear cress).